Here is a 160-residue protein sequence, read N- to C-terminus: Phosphopantetheine adenylyltransferase (160 aa).

A substrate-binding site is contributed by T10. ATP contacts are provided by residues T10–F11 and H18. Residues K42, L74, and R88 each contribute to the substrate site. ATP is bound by residues G89 to R91, E99, and N124 to T130.

This sequence belongs to the bacterial CoaD family. Homohexamer. It depends on Mg(2+) as a cofactor.

It localises to the cytoplasm. The catalysed reaction is (R)-4'-phosphopantetheine + ATP + H(+) = 3'-dephospho-CoA + diphosphate. It functions in the pathway cofactor biosynthesis; coenzyme A biosynthesis; CoA from (R)-pantothenate: step 4/5. Its function is as follows. Reversibly transfers an adenylyl group from ATP to 4'-phosphopantetheine, yielding dephospho-CoA (dPCoA) and pyrophosphate. This is Phosphopantetheine adenylyltransferase from Aeromonas hydrophila subsp. hydrophila (strain ATCC 7966 / DSM 30187 / BCRC 13018 / CCUG 14551 / JCM 1027 / KCTC 2358 / NCIMB 9240 / NCTC 8049).